A 478-amino-acid chain; its full sequence is 7-dehydrocholesterol reductase (478 aa).

Residues 1 to 28 (MMASDRVRKRHKGSANGAQTVEKEPSKE) are disordered. 6 consecutive transmembrane segments (helical) span residues 43 to 63 (LSGVILLLCFAPFLVSFFIMA), 97 to 117 (WAAAKIYAIWVTFQVVLYMCV), 180 to 200 (WIPLLWCTNILGYAVSTFAFI), 269 to 289 (VTNSMILVNVLQAVYVVDFFW), 309 to 329 (LGWGDCVWLPFLYTLQGLYLV), and 333 to 353 (IQLSTPHAAGVLILGLVGYYI). NADP(+)-binding positions include lysine 361, arginine 365, methionine 398, tryptophan 403, and 410–411 (NY). Residues 424–444 (ACGGNHLLPYFYIIYMTILLV) form a helical membrane-spanning segment. Residues aspartate 450, 454–458 (CSNKY), and tyrosine 465 each bind NADP(+).

Belongs to the ERG4/ERG24 family.

It localises to the endoplasmic reticulum membrane. It catalyses the reaction cholesterol + NADP(+) = 7-dehydrocholesterol + NADPH + H(+). The enzyme catalyses 7-dehydrodesmosterol + NADPH + H(+) = desmosterol + NADP(+). It functions in the pathway steroid biosynthesis; cholesterol biosynthesis. In terms of biological role, catalyzes the last step of the cholesterol synthesis pathway, which transforms cholesta-5,7-dien-3beta-ol (7-dehydrocholesterol,7-DHC) into cholesterol by reducing the C7-C8 double bond of its sterol core. Can also metabolize cholesta-5,7,24-trien-3beta-ol (7-dehydrodemosterol, 7-DHD) to desmosterol, which is then metabolized by the Delta(24)-sterol reductase (DHCR24) to cholesterol. Modulates ferroptosis (a form of regulated cell death driven by iron-dependent lipid peroxidation) through the metabolic breakdown of the anti-ferroptotic metabolites 7-DHC and 7-DHD which, when accumulated, divert the propagation of peroxyl radical-mediated damage from phospholipid components to its sterol core, protecting plasma and mitochondrial membranes from phospholipid autoxidation. The chain is 7-dehydrocholesterol reductase (dhcr7) from Danio rerio (Zebrafish).